The primary structure comprises 167 residues: UPF0102 protein RB9115 (167 aa).

It belongs to the UPF0102 family.

This chain is UPF0102 protein RB9115, found in Rhodopirellula baltica (strain DSM 10527 / NCIMB 13988 / SH1).